A 283-amino-acid polypeptide reads, in one-letter code: Prepilin leader peptidase/N-methyltransferase (283 aa).

A run of 7 helical transmembrane segments spans residues 13 to 33 (VWLLALLLLGLIIGSFLNVVI), 106 to 126 (WRYPLIELLSGLSFLLAGLLW), 128 to 148 (PGLALLGALLCFGIFVALAAI), 153 to 173 (QLLPDVMTLPLLWGGLLFNLA), 176 to 196 (FVPLEQAVVGAVAGYLSLWLI), 216 to 236 (LLAALGAWLGWQALPNLVLIA), and 259 to 279 (LAFGPWLAVSGAMGLVLNVLG).

This sequence belongs to the peptidase A24 family.

It localises to the cell inner membrane. The enzyme catalyses Typically cleaves a -Gly-|-Phe- bond to release an N-terminal, basic peptide of 5-8 residues from type IV prepilin, and then N-methylates the new N-terminal amino group, the methyl donor being S-adenosyl-L-methionine.. Its function is as follows. Plays a role in type II pseudopili formation by proteolytically removing the leader sequence from substrate proteins and subsequently monomethylating the alpha-amino group of the newly exposed N-terminal phenylalanine. Substrates include proteins required for biogenesis of the type II general secretory apparatus. The polypeptide is Prepilin leader peptidase/N-methyltransferase (outO) (Dickeya chrysanthemi (Pectobacterium chrysanthemi)).